A 427-amino-acid polypeptide reads, in one-letter code: UDP-N-acetyl-D-mannosamine dehydrogenase (427 aa).

NAD(+) contacts are provided by Tyr20, Ile21, Asp40, Arg45, Thr92, and Thr130. 8 residues coordinate UDP-N-acetyl-alpha-D-mannosaminouronate: Arg157, Val158, Lys209, Asn213, Arg216, His247, Arg249, and Gly260. Lys209 functions as the Proton donor/acceptor in the catalytic mechanism. Catalysis depends on Cys263, which acts as the Nucleophile. UDP-N-acetyl-alpha-D-mannosaminouronate-binding residues include Tyr317 and Lys318. An NAD(+)-binding site is contributed by Arg325. UDP-N-acetyl-alpha-D-mannosaminouronate is bound at residue Lys403.

It belongs to the UDP-glucose/GDP-mannose dehydrogenase family. As to quaternary structure, homotetramer; probably dimer of dimers.

It carries out the reaction UDP-N-acetyl-alpha-D-mannosamine + 2 NAD(+) + H2O = UDP-N-acetyl-alpha-D-mannosaminouronate + 2 NADH + 3 H(+). In terms of biological role, catalyzes the four-electron oxidation of UDP-N-acetyl-D-mannosamine (UDP-ManNAc), reducing NAD(+) and releasing UDP-N-acetylmannosaminuronic acid (UDP-ManNAcA). The polypeptide is UDP-N-acetyl-D-mannosamine dehydrogenase (wecC) (Methanocaldococcus jannaschii (strain ATCC 43067 / DSM 2661 / JAL-1 / JCM 10045 / NBRC 100440) (Methanococcus jannaschii)).